A 218-amino-acid chain; its full sequence is Oxidoreductase claN (218 aa).

Residues lysine 38, aspartate 57, and asparagine 82 each coordinate NADP(+). The Proton donor role is filled by serine 134. Residues tyrosine 148, lysine 152, and threonine 183 each coordinate NADP(+). Catalysis depends on tyrosine 148, which acts as the Proton acceptor. Residue lysine 152 is the Lowers pKa of active site Tyr of the active site.

Belongs to the short-chain dehydrogenases/reductases (SDR) family.

Its pathway is pigment biosynthesis. Its function is as follows. Oxidoreductase; part of the gene cluster that mediates the biosynthesis of the bianthraquinone cladofulvin, a conidial pigment not required for virulence but that plays a role in fitness and resistance to environmental stresses including UV light and low-temperature stress. The pathway begins with the synthesis of atrochrysone thioester by the polyketide synthase (PKS) claG. The atrochrysone carboxyl ACP thioesterase claF then breaks the thioester bond and releases the atrochrysone carboxylic acid from claG. This compound is decarboxylated by claH to yield emodin, which is further converted to chrysophanol hydroquinone by the reductase claC and the dehydratase claB. The cytochrome P450 monooxygenase claM then catalyzes the dimerization of nataloe-emodin to cladofulvin. In Passalora fulva (Tomato leaf mold), this protein is Oxidoreductase claN.